A 243-amino-acid chain; its full sequence is Exosome complex component Rrp41 (243 aa).

Belongs to the RNase PH family. Rrp41 subfamily. Component of the archaeal exosome complex. Forms a hexameric ring-like arrangement composed of 3 Rrp41-Rrp42 heterodimers. The hexameric ring associates with a trimer of Rrp4 and/or Csl4 subunits.

Its subcellular location is the cytoplasm. Catalytic component of the exosome, which is a complex involved in RNA degradation. Has 3'-&gt;5' exoribonuclease activity. Can also synthesize heteromeric RNA-tails. This is Exosome complex component Rrp41 from Sulfolobus acidocaldarius (strain ATCC 33909 / DSM 639 / JCM 8929 / NBRC 15157 / NCIMB 11770).